We begin with the raw amino-acid sequence, 625 residues long: Autophagy-related protein 20 (625 aa).

Residues 1-59 (MNPNDNNLFGDIEQDNNPSFYGNQSFLRDPYGKSKQTCPPSVTSNGDPSITNDDNNSAH) are disordered. Polar residues-rich tracts occupy residues 15–26 (DNNPSFYGNQSF) and 34–59 (SKQT…NSAH). The 124-residue stretch at 79–202 (NDPNLQINVI…HKFLDPNYEL (124 aa)) folds into the PX domain. The a 1,2-diacyl-sn-glycero-3-phospho-(1D-myo-inositol-3-phosphate) site is built by Arg-118, Ser-120, Lys-144, and Arg-167.

It belongs to the sorting nexin family.

The protein resides in the endosome membrane. Its subcellular location is the preautophagosomal structure membrane. Required for cytoplasm to vacuole transport (Cvt), pexophagy and mitophagy. Also involved in endoplasmic reticulum-specific autophagic process and is essential for the survival of cells subjected to severe ER stress. Functions in protein retrieval from the endocytic pathway. The sequence is that of Autophagy-related protein 20 (ATG20) from Debaryomyces hansenii (strain ATCC 36239 / CBS 767 / BCRC 21394 / JCM 1990 / NBRC 0083 / IGC 2968) (Yeast).